Consider the following 441-residue polypeptide: Growth/differentiation factor 9 (441 aa).

The first 29 residues, 1 to 29 (MALPSNFLLGVCCFAWLCFLSSLSSQAST), serve as a signal peptide directing secretion. Residues 30–306 (EESQSGASEN…EVERSPRRRR (277 aa)) constitute a propeptide that is removed on maturation. Asparagine 163, asparagine 229, asparagine 258, and asparagine 325 each carry an N-linked (GlcNAc...) asparagine glycan. 3 cysteine pairs are disulfide-bonded: cysteine 340-cysteine 406, cysteine 369-cysteine 438, and cysteine 373-cysteine 440.

Belongs to the TGF-beta family. As to quaternary structure, homodimer or heterodimer (Potential). But, in contrast to other members of this family, cannot be disulfide-linked. Post-translationally, phosphorylated; phosphorylation is critical for GDF9 function. Ovary. Strongly expressed in germinal vesicle (GV) stage oocytes, MII-stage oocytes and in zygotes.

The protein resides in the secreted. Required for ovarian folliculogenesis. The chain is Growth/differentiation factor 9 (Gdf9) from Mus musculus (Mouse).